The chain runs to 659 residues: Nitrate import ATP-binding protein NrtC (659 aa).

Residues 5–239 (LAVDHVHQVF…RPRQRLEMME (235 aa)) form the ABC transporter domain. Position 42-49 (42-49 (GHSGCGKS)) interacts with ATP. The tract at residues 255-278 (QQQRRAKRRAKAAAPAPAVAASQQ) is linker. Positions 279–659 (KTVRLGFLPG…VAPIPLATSA (381 aa)) are nrtA-like.

This sequence belongs to the ABC transporter superfamily. Nitrate/nitrite/cyanate uptake transporter (NitT) (TC 3.A.1.16) family. In terms of assembly, the complex is composed of two ATP-binding proteins (NrtC and NrtD), two transmembrane proteins (NrtB) and a solute-binding protein (NrtA).

The protein localises to the cell inner membrane. It catalyses the reaction nitrate(out) + ATP + H2O = nitrate(in) + ADP + phosphate + H(+). With respect to regulation, transport is inhibited by ammonium. The C-terminal domain of NrtC is involved in the ammonium-promoted inhibition of the nitrate/nitrite transporter. Part of the ABC transporter complex NrtABCD involved in nitrate uptake. The complex is probably also involved in nitrite transport. Probably responsible for energy coupling to the transport system. The protein is Nitrate import ATP-binding protein NrtC of Synechococcus elongatus (strain ATCC 33912 / PCC 7942 / FACHB-805) (Anacystis nidulans R2).